The primary structure comprises 366 residues: MIIDTTKVQQAINSFSRSESLKEVYGLIWLLVPIFTPLLGIIIGVLVIVWLERQISAGVQQRIGPEYAGPLGILQALADGTKLLFKEDLLPSRGDILLFSLGPSIAVISILLSYSVIPFGYHLVLADLSIGVFLWIAISSIAPIGLLMSGYGSNNKYSFLGGLRAAAQSISYEIPLTPCVLSISLLSNSSSTVDIVEAQSKYGFWGWNLWRQPIGFMVFLISSLAECERLPFDLPEAEEELVAGYQTEYSGIKFGLFYVASYLNLLVSSLFVTVLYLGGWNLSIPYIFIFIPELFRINEVCGIFGMTIGIFITLAKAYLFLFISITTRWTLPRMRMDQLLNLGWKFLLPISLGNLLLTTSFQLLSL.

7 helical membrane passes run 28–48 (IWLL…VLVI), 105–125 (IAVI…HLVL), 128–148 (LSIG…GLLM), 250–270 (SGIK…VSSL), 271–291 (FVTV…FIFI), 303–323 (IFGM…FLFI), and 346–366 (FLLP…LLSL).

It belongs to the complex I subunit 1 family. In terms of assembly, NDH is composed of at least 16 different subunits, 5 of which are encoded in the nucleus.

Its subcellular location is the plastid. The protein resides in the chloroplast thylakoid membrane. The catalysed reaction is a plastoquinone + NADH + (n+1) H(+)(in) = a plastoquinol + NAD(+) + n H(+)(out). It catalyses the reaction a plastoquinone + NADPH + (n+1) H(+)(in) = a plastoquinol + NADP(+) + n H(+)(out). In terms of biological role, NDH shuttles electrons from NAD(P)H:plastoquinone, via FMN and iron-sulfur (Fe-S) centers, to quinones in the photosynthetic chain and possibly in a chloroplast respiratory chain. The immediate electron acceptor for the enzyme in this species is believed to be plastoquinone. Couples the redox reaction to proton translocation, and thus conserves the redox energy in a proton gradient. The polypeptide is NAD(P)H-quinone oxidoreductase subunit 1, chloroplastic (Nandina domestica (Heavenly bamboo)).